The sequence spans 643 residues: Inorganic pyrophosphatase TTM1 (643 aa).

A mitochondrion-targeting transit peptide spans 1–15; it reads MALDSSVALSPRRRH. Residues 248-410 form the CYTH domain; it reads NPTYILKSSK…PHTYIEQIQL (163 aa). A helical membrane pass occupies residues 618 to 638; sequence LESSTVPILLGLAIGCVGIFA.

It depends on Mg(2+) as a cofactor. In terms of tissue distribution, ubiquitously expressed in all tissues, with strong expression detected in senescent leaves.

Its subcellular location is the mitochondrion outer membrane. It carries out the reaction diphosphate + H2O = 2 phosphate + H(+). In terms of biological role, exhibits pyrophosphatase activity with stronger affinity for pyrophosphate (PPi), moderate affinity for ATP and ADP, and weak affinity for tripolyphosphate (PPPi). No activity observed toward uridine substrate. Positively regulates natural and dark-induced leaf senescence. The sequence is that of Inorganic pyrophosphatase TTM1 from Arabidopsis thaliana (Mouse-ear cress).